Consider the following 520-residue polypeptide: Beta-2-syntrophin (520 aa).

A disordered region spans residues 45-95; sequence EPPAAAFNGLPNGGGGESLPGSPNRGLGPPSPPAPPRGPAGEASASPPVRR. A compositionally biased stretch (low complexity) spans 63 to 72; sequence LPGSPNRGLG. The span at 73–82 shows a compositional bias: pro residues; it reads PPSPPAPPRG. Phosphoserine is present on residues Ser75, Ser90, Ser109, Ser191, Ser202, Ser213, Ser373, and Ser375. Low complexity predominate over residues 83–93; it reads PAGEASASPPV. The PDZ domain occupies 95–178; sequence RVRVVKQEAG…EVLLEVKFIR (84 aa). 2 PH domains span residues 143–280 and 305–417; these read ILSV…TNIM and EVKH…QGCH. The disordered stretch occupies residues 195 to 220; it reads WEGASPQSPSFSGSEDSGSPKHQNTT. Residues 197–211 show a composition bias toward low complexity; that stretch reads GASPQSPSFSGSEDS. The region spanning 464–520 is the SU domain; the sequence is PFERLKMSADDGIRNLYLDFGGPEGELTMDLHSCPKPIVFVLHTFLSAKVTRMGLLV. Residues 498–520 form a calmodulin-binding region; the sequence is PKPIVFVLHTFLSAKVTRMGLLV.

The protein belongs to the syntrophin family. In terms of assembly, monomer and homodimer. Interacts with the dystrophin protein DMD and related protein DTNA; and with the other members of the syntrophin family: SNTA1 and SNTB1. Interacts with the neuroregulin receptor ERBB4. Interacts with PTPRN when phosphorylated, protecting PTPRN from protein cleavage by CAPN1. Dephosphorylation upon insulin stimulation disrupts the interaction with PTPRN and results in the cleavage of PTPRN. Interacts with the sodium channel proteins SCN4A and SCN5A. Interacts with SAST, MAST205, microtubules and microtubule-associated proteins. Interacts with the dystrophin related protein UTRN. Interacts with DTNB. Post-translationally, phosphorylated. Partially dephosphorylated upon insulin stimulation. As to expression, ubiquitous. Expressed at high levels in the testis.

Its subcellular location is the membrane. It localises to the cytoplasmic vesicle. The protein resides in the secretory vesicle membrane. It is found in the cell junction. The protein localises to the cytoplasm. Its subcellular location is the cytoskeleton. In terms of biological role, adapter protein that binds to and probably organizes the subcellular localization of a variety of membrane proteins. May link various receptors to the actin cytoskeleton and the dystrophin glycoprotein complex. May play a role in the regulation of secretory granules via its interaction with PTPRN. This chain is Beta-2-syntrophin (Sntb2), found in Mus musculus (Mouse).